A 317-amino-acid chain; its full sequence is Transaldolase (317 aa).

The Schiff-base intermediate with substrate role is filled by K132.

Belongs to the transaldolase family. Type 1 subfamily. Homodimer.

It localises to the cytoplasm. It carries out the reaction D-sedoheptulose 7-phosphate + D-glyceraldehyde 3-phosphate = D-erythrose 4-phosphate + beta-D-fructose 6-phosphate. It functions in the pathway carbohydrate degradation; pentose phosphate pathway; D-glyceraldehyde 3-phosphate and beta-D-fructose 6-phosphate from D-ribose 5-phosphate and D-xylulose 5-phosphate (non-oxidative stage): step 2/3. In terms of biological role, transaldolase is important for the balance of metabolites in the pentose-phosphate pathway. This Actinobacillus succinogenes (strain ATCC 55618 / DSM 22257 / CCUG 43843 / 130Z) protein is Transaldolase.